The chain runs to 692 residues: Threonine--tRNA ligase (692 aa).

Residues 2-59 (AEAHISITVNGEAKEVEASQTGVELFADDKNIIAVRLNGELRDLYTPLHDGDNVESVT) form the TGS domain. Positions 255 to 561 (DHRKLGQEMD…LLEHYAGAFP (307 aa)) are catalytic. 3 residues coordinate Zn(2+): C360, H411, and H538.

The protein belongs to the class-II aminoacyl-tRNA synthetase family. In terms of assembly, homodimer. Zn(2+) serves as cofactor.

The protein localises to the cytoplasm. The enzyme catalyses tRNA(Thr) + L-threonine + ATP = L-threonyl-tRNA(Thr) + AMP + diphosphate + H(+). In terms of biological role, catalyzes the attachment of threonine to tRNA(Thr) in a two-step reaction: L-threonine is first activated by ATP to form Thr-AMP and then transferred to the acceptor end of tRNA(Thr). Also edits incorrectly charged L-seryl-tRNA(Thr). The chain is Threonine--tRNA ligase from Bifidobacterium animalis subsp. lactis (strain AD011).